Consider the following 65-residue polypeptide: Dybowskin-2CDYa (65 aa).

An N-terminal signal peptide occupies residues 1–22; sequence MFTLKKSLLLLFFIGVIKLSLC. Positions 23–47 are excised as a propeptide; it reads EEERNADDDERRDDPDEMDVEVENR. Positions 26-43 are enriched in acidic residues; sequence RNADDDERRDDPDEMDVE. Positions 26-65 are disordered; it reads RNADDDERRDDPDEMDVEVENRSAVGRHGRRFGLRKHRKH. A compositionally biased stretch (basic residues) spans 50–65; the sequence is VGRHGRRFGLRKHRKH.

This sequence belongs to the frog skin active peptide (FSAP) family. Brevinin subfamily. In terms of tissue distribution, expressed by the skin glands.

It localises to the secreted. Its function is as follows. Antimicrobial peptide. Has activity against the Gram-positive bacterium S.aureus (MIC=6 uM) and the Gram-negative bacterium E.coli (MIC=3 uM). Lacks hemolytic activity against human erythrocytes. In Rana dybowskii (Dybovsky's frog), this protein is Dybowskin-2CDYa.